A 98-amino-acid polypeptide reads, in one-letter code: C-X-C motif chemokine 10 (98 aa).

Positions 1-21 (MNQTAILICCLIFLTLSGIQG) are cleaved as a signal peptide. R26 bears the Citrulline; by PAD2 mark. Cystine bridges form between C30–C57 and C32–C74.

This sequence belongs to the intercrine alpha (chemokine CxC) family. In terms of assembly, monomer, dimer, and tetramer. Interacts with CXCR3 (via N-terminus). Post-translationally, several proteases can mediate post-secretion cleavages. DPP4 cleaves CXCL10 on its N-terminal 2 amino acids leading to an antagonist form of CXCL10. This dominant negative form is capable of binding CXCR3 but does not induce signaling. MMP9 cleaves 9 amino acids instead. In terms of tissue distribution, mainly secreted by monocytes, endothelial cells as well as fibroblasts. Expressed by epithelial cells in thymus. Microglial cells produce CXCL10 in response to viral stimulation.

It is found in the secreted. In terms of biological role, pro-inflammatory cytokine that is involved in a wide variety of processes such as chemotaxis, differentiation, and activation of peripheral immune cells, regulation of cell growth, apoptosis and modulation of angiostatic effects. Plays thereby an important role during viral infections by stimulating the activation and migration of immune cells to the infected sites. Mechanistically, binding of CXCL10 to the CXCR3 receptor activates G protein-mediated signaling and results in downstream activation of phospholipase C-dependent pathway, an increase in intracellular calcium production and actin reorganization. In turn, recruitment of activated Th1 lymphocytes occurs at sites of inflammation. Activation of the CXCL10/CXCR3 axis also plays an important role in neurons in response to brain injury for activating microglia, the resident macrophage population of the central nervous system, and directing them to the lesion site. This recruitment is an essential element for neuronal reorganization. The chain is C-X-C motif chemokine 10 (CXCL10) from Homo sapiens (Human).